Reading from the N-terminus, the 965-residue chain is Villin-3 (965 aa).

Gelsolin-like repeat units follow at residues 27-79, 150-190, 262-304, 401-452, 533-573, and 635-676; these read ENFE…DEAG, VHLK…QERA, GQVE…EERK, ANSK…EDQE, NKAL…EQQE, and FQVE…KEKQ. Low complexity-rich tracts occupy residues 769-780 and 808-828; these read AFNSSSGRTSSP and SSPSSKSPPRRSGLTSQASQR. Disordered regions lie at residues 769-828 and 840-906; these read AFNS…ASQR and TAEK…GVTF. The segment covering 865–879 has biased composition (acidic residues); the sequence is EATEEATEAKEEEEV. S880 is subject to Phosphoserine. Positions 900–965 constitute an HP domain; that stretch reads ETTGVTFTYE…DLLKKKFNLF (66 aa).

Belongs to the villin/gelsolin family. Expressed in all tissues examined, including root hairs.

It is found in the cytoplasm. Its subcellular location is the cytoskeleton. Functionally, binds actin and actin filament bundles in a Ca(2+)-insensitive manner, but severs actin filaments in a calcium-dependent manner, regardless of the presence or not of VLN1 (AC O81643). Acts redundantly with VLN2 (AC O81644) to generate thick actin filament bundles, to regulate directional organ growth and in sclerenchyma development. The polypeptide is Villin-3 (Arabidopsis thaliana (Mouse-ear cress)).